The primary structure comprises 280 residues: Formamidopyrimidine-DNA glycosylase (280 aa).

Pro-2 (schiff-base intermediate with DNA) is an active-site residue. The active-site Proton donor is Glu-3. Lys-60 serves as the catalytic Proton donor; for beta-elimination activity. DNA contacts are provided by His-93 and Arg-112. Residues 240–274 (YVYGQHSKPCRVCGADIIKIKVGGRGTHLCPTCQP) form an FPG-type zinc finger. Residue Arg-264 is the Proton donor; for delta-elimination activity of the active site.

This sequence belongs to the FPG family. In terms of assembly, monomer. Zn(2+) serves as cofactor.

The catalysed reaction is Hydrolysis of DNA containing ring-opened 7-methylguanine residues, releasing 2,6-diamino-4-hydroxy-5-(N-methyl)formamidopyrimidine.. The enzyme catalyses 2'-deoxyribonucleotide-(2'-deoxyribose 5'-phosphate)-2'-deoxyribonucleotide-DNA = a 3'-end 2'-deoxyribonucleotide-(2,3-dehydro-2,3-deoxyribose 5'-phosphate)-DNA + a 5'-end 5'-phospho-2'-deoxyribonucleoside-DNA + H(+). Its function is as follows. Involved in base excision repair of DNA damaged by oxidation or by mutagenic agents. Acts as a DNA glycosylase that recognizes and removes damaged bases. Has a preference for oxidized purines, such as 7,8-dihydro-8-oxoguanine (8-oxoG). Has AP (apurinic/apyrimidinic) lyase activity and introduces nicks in the DNA strand. Cleaves the DNA backbone by beta-delta elimination to generate a single-strand break at the site of the removed base with both 3'- and 5'-phosphates. The chain is Formamidopyrimidine-DNA glycosylase from Oceanobacillus iheyensis (strain DSM 14371 / CIP 107618 / JCM 11309 / KCTC 3954 / HTE831).